A 222-amino-acid polypeptide reads, in one-letter code: Large ribosomal subunit protein uL4 (222 aa).

It belongs to the universal ribosomal protein uL4 family. As to quaternary structure, part of the 50S ribosomal subunit.

One of the primary rRNA binding proteins, this protein initially binds near the 5'-end of the 23S rRNA. It is important during the early stages of 50S assembly. It makes multiple contacts with different domains of the 23S rRNA in the assembled 50S subunit and ribosome. In terms of biological role, forms part of the polypeptide exit tunnel. In Chlamydia trachomatis serovar L2 (strain ATCC VR-902B / DSM 19102 / 434/Bu), this protein is Large ribosomal subunit protein uL4.